We begin with the raw amino-acid sequence, 115 residues long: NAD(P)H-quinone oxidoreductase subunit M (115 aa).

Belongs to the complex I NdhM subunit family. As to quaternary structure, NDH-1 can be composed of about 15 different subunits; different subcomplexes with different compositions have been identified which probably have different functions.

Its subcellular location is the cellular thylakoid membrane. The enzyme catalyses a plastoquinone + NADH + (n+1) H(+)(in) = a plastoquinol + NAD(+) + n H(+)(out). It catalyses the reaction a plastoquinone + NADPH + (n+1) H(+)(in) = a plastoquinol + NADP(+) + n H(+)(out). Functionally, NDH-1 shuttles electrons from an unknown electron donor, via FMN and iron-sulfur (Fe-S) centers, to quinones in the respiratory and/or the photosynthetic chain. The immediate electron acceptor for the enzyme in this species is believed to be plastoquinone. Couples the redox reaction to proton translocation, and thus conserves the redox energy in a proton gradient. Cyanobacterial NDH-1 also plays a role in inorganic carbon-concentration. The sequence is that of NAD(P)H-quinone oxidoreductase subunit M from Prochlorococcus marinus (strain NATL1A).